Consider the following 103-residue polypeptide: Small ribosomal subunit protein uS10 (103 aa).

This sequence belongs to the universal ribosomal protein uS10 family. In terms of assembly, part of the 30S ribosomal subunit.

Involved in the binding of tRNA to the ribosomes. In Verminephrobacter eiseniae (strain EF01-2), this protein is Small ribosomal subunit protein uS10.